The chain runs to 63 residues: UPF0337 protein SERP0494 (63 aa).

Residues 1–46 (MAEDKFEQAKGNIKETVGNATDNKELEKDGKGDKASGKAKEAVENV) are disordered. A compositionally biased stretch (basic and acidic residues) spans 22 to 46 (DNKELEKDGKGDKASGKAKEAVENV).

The protein belongs to the UPF0337 (CsbD) family.

This is UPF0337 protein SERP0494 from Staphylococcus epidermidis (strain ATCC 35984 / DSM 28319 / BCRC 17069 / CCUG 31568 / BM 3577 / RP62A).